A 357-amino-acid polypeptide reads, in one-letter code: Neutral protease 2 homolog UREG_02006 (357 aa).

The N-terminal stretch at 1-19 (MLFSSRFLALAALLGQALA) is a signal peptide. The propeptide occupies 20–179 (LPIDDFSQSD…QSAVPTIEKR (160 aa)). Cystine bridges form between cysteine 187-cysteine 259 and cysteine 266-cysteine 284. Histidine 308 is a Zn(2+) binding site. Glutamate 309 is a catalytic residue. Zn(2+) contacts are provided by histidine 312 and aspartate 323.

This sequence belongs to the peptidase M35 family. Requires Zn(2+) as cofactor.

Its subcellular location is the secreted. The catalysed reaction is Preferential cleavage of bonds with hydrophobic residues in P1'. Also 3-Asn-|-Gln-4 and 8-Gly-|-Ser-9 bonds in insulin B chain.. Functionally, secreted metalloproteinase that allows assimilation of proteinaceous substrates. Shows high activities on basic nuclear substrates such as histone and protamine. The protein is Neutral protease 2 homolog UREG_02006 of Uncinocarpus reesii (strain UAMH 1704).